Reading from the N-terminus, the 211-residue chain is Large ribosomal subunit protein eL13 (211 aa).

Belongs to the eukaryotic ribosomal protein eL13 family. Component of the 60S large ribosomal subunit (LSU).

It is found in the cytoplasm. Functionally, component of the ribosome, a large ribonucleoprotein complex responsible for the synthesis of proteins in the cell. The small ribosomal subunit (SSU) binds messenger RNAs (mRNAs) and translates the encoded message by selecting cognate aminoacyl-transfer RNA (tRNA) molecules. The large subunit (LSU) contains the ribosomal catalytic site termed the peptidyl transferase center (PTC), which catalyzes the formation of peptide bonds, thereby polymerizing the amino acids delivered by tRNAs into a polypeptide chain. The nascent polypeptides leave the ribosome through a tunnel in the LSU and interact with protein factors that function in enzymatic processing, targeting, and the membrane insertion of nascent chains at the exit of the ribosomal tunnel. As part of the LSU, it is probably required for its formation and the maturation of rRNAs. The polypeptide is Large ribosomal subunit protein eL13 (RPL13) (Gallus gallus (Chicken)).